Consider the following 368-residue polypeptide: RING finger protein 32 (368 aa).

A disordered region spans residues 45–82; the sequence is RKKEKKSKSLKRDATAIIDTGLRKSTEGPNMEDPEKEY. The RING-type 1; atypical zinc-finger motif lies at 129 to 171; that stretch reads CPICKEEFELHPQVLLSCSHVFHRACLQAFEKFTNKKTCPLCR. An IQ domain is found at 188 to 217; that stretch reads RVKCATRIQAYWRGYIVRKWYRNLRKIIPP. An RING-type 2; atypical zinc finger spans residues 295 to 358; the sequence is CSICLTPLSF…APFHVCPLCR (64 aa).

The protein localises to the cytoplasm. Functionally, may play a role in sperm formation. In Mus musculus (Mouse), this protein is RING finger protein 32 (Rnf32).